We begin with the raw amino-acid sequence, 35 residues long: Turripeptide gsp9a (35 aa).

A 4-hydroxyproline mark is found at Pro3 and Pro4. Cystine bridges form between Cys7–Cys22, Cys12–Cys26, and Cys18–Cys33. 2 positions are modified to 4-carboxyglutamate: Glu14 and Glu17.

As to expression, expressed by the venom duct.

The protein localises to the secreted. This chain is Turripeptide gsp9a, found in Gemmula speciosa (Splendid gem-turris).